Reading from the N-terminus, the 624-residue chain is Galactan 5-O-arabinofuranosyltransferase (624 aa).

13 consecutive transmembrane segments (helical) span residues 5–25, 43–63, 73–93, 127–147, 159–179, 181–201, 203–223, 234–254, 280–300, 326–346, 355–375, 391–411, and 422–442; these read VLGQ…VAIA, ALTT…GLLW, LGAL…PLGA, IGLP…IAAA, WSIV…AAMI, FEYA…YAST, PYAA…WAGL, AIVG…LLLV, LAVI…PYLL, FPMF…VWLV, AGAL…SMLT, LTVL…LAIA, and VVAA…QDIP.

Belongs to the glycosyltransferase 85 family.

It is found in the cell membrane. It catalyses the reaction Adds an alpha-D-arabinofuranosyl group from trans,octacis-decaprenylphospho-beta-D-arabinofuranose at the 5-O-position of the eighth, tenth and twelfth galactofuranose unit of the galactofuranan chain of [beta-D-galactofuranosyl-(1-&gt;5)-beta-D-galactofuranosyl-(1-&gt;6)]14-beta-D-galactofuranosyl-(1-&gt;5)-beta-D-galactofuranosyl-(1-&gt;4)-alpha-L-rhamnopyranosyl-(1-&gt;3)-N-acetyl-alpha-D-glucosaminyl-diphospho-trans,octacis-decaprenol.. The protein operates within cell wall biogenesis; cell wall polysaccharide biosynthesis. In terms of biological role, involved in the biosynthesis of the arabinogalactan (AG) region of the mycolylarabinogalactan-peptidoglycan (mAGP) complex, an essential component of the mycobacterial cell wall. Catalyzes the addition of the first key arabinofuranosyl (Araf) residue from the sugar donor decaprenyl-phospho-arabinose (DPA) on the C-5 of a 6-linked galactofuranosyl (Galf) of the galactan domain, thus 'priming' the galactan for further elaboration by other arabinofuranosyltransferases. It is not able to add an Araf residue to a terminal Galf. The chain is Galactan 5-O-arabinofuranosyltransferase from Mycolicibacterium smegmatis (strain ATCC 700084 / mc(2)155) (Mycobacterium smegmatis).